Here is a 343-residue protein sequence, read N- to C-terminus: MDLNTILIILGILALIGLVAHGIWSNRREKSQYFDNENAFHRNPQSTGRPSAQASQPMTPNFAQPAKETEQIRQTYQEPQVRQMSSSPEQQTRPTAQAMPENRAEFNPNTVQPEQQPLDFNAAENIKITLPNTETRAGGAEPIRYEYHAEEERSAPLEQTFNQPVYTEDRAVPDMQVSLRQPAPESPISQPTLQQPVNDAPAYQHSQPAPAEPTDFIMLYVVAPENRQFHGPSLAQALDNLGFIFGQGNIYHRHLDLTVASPAIFSVANINQPGTFNPHGMQDFSTVGVALFMQLPVAGNPRANLKMMIQAAKNLASQLGGFVLTEQQEEFDVMAEAAYLARV.

Over 1-4 the chain is Periplasmic; the sequence is MDLN. Residues 5–25 traverse the membrane as a helical segment; that stretch reads TILIILGILALIGLVAHGIWS. At 26–343 the chain is on the cytoplasmic side; that stretch reads NRREKSQYFD…MAEAAYLARV (318 aa). Residues 39–98 form a disordered region; that stretch reads AFHRNPQSTGRPSAQASQPMTPNFAQPAKETEQIRQTYQEPQVRQMSSSPEQQTRPTAQA. 2 stretches are compositionally biased toward polar residues: residues 43–62 and 72–95; these read NPQS…TPNF and IRQT…TRPT.

This sequence belongs to the ZipA family. Interacts with FtsZ via their C-terminal domains.

It is found in the cell inner membrane. Functionally, essential cell division protein that stabilizes the FtsZ protofilaments by cross-linking them and that serves as a cytoplasmic membrane anchor for the Z ring. Also required for the recruitment to the septal ring of downstream cell division proteins. In Actinobacillus succinogenes (strain ATCC 55618 / DSM 22257 / CCUG 43843 / 130Z), this protein is Cell division protein ZipA.